A 174-amino-acid polypeptide reads, in one-letter code: uncharacterized protein (174 aa).

A disordered region spans residues 78–97 (TFGRNIKTPDISNPTRARNE).

This sequence to yeast YMR295c.

This is an uncharacterized protein from Saccharomyces cerevisiae (strain ATCC 204508 / S288c) (Baker's yeast).